Reading from the N-terminus, the 354-residue chain is Protein-arginine kinase (354 aa).

The Phosphagen kinase C-terminal domain maps to 24–254 (IVLSSRIRLA…QQIIHQEKTA (231 aa)). Residues 27–31 (SSRIR), H92, R125, 176–180 (RASVM), and 207–212 (RGIYGE) each bind ATP. The RDXXRA motif of the pArg binding pocket involved in allosteric regulation motif lies at 337–342 (RDYRRA).

The protein belongs to the ATP:guanido phosphotransferase family.

It catalyses the reaction L-arginyl-[protein] + ATP = N(omega)-phospho-L-arginyl-[protein] + ADP + H(+). Its activity is regulated as follows. Appears to be allosterically activated by the binding of pArg-containing polypeptides to the pArg-binding pocket localized in the C-terminal domain of McsB. Its function is as follows. Catalyzes the specific phosphorylation of arginine residues in a large number of proteins. Is part of the bacterial stress response system. Protein arginine phosphorylation has a physiologically important role and is involved in the regulation of many critical cellular processes, such as protein homeostasis, motility, competence, and stringent and stress responses, by regulating gene expression and protein activity. This Bacillus mycoides (strain KBAB4) (Bacillus weihenstephanensis) protein is Protein-arginine kinase.